The sequence spans 343 residues: Cytoplasmic tRNA 2-thiolation protein 1 (343 aa).

Belongs to the TtcA family. CTU1/NCS6/ATPBD3 subfamily.

Its subcellular location is the cytoplasm. It functions in the pathway tRNA modification; 5-methoxycarbonylmethyl-2-thiouridine-tRNA biosynthesis. Plays a central role in 2-thiolation of mcm(5)S(2)U at tRNA wobble positions of tRNA(Lys), tRNA(Glu) and tRNA(Gln). Directly binds tRNAs and probably acts by catalyzing adenylation of tRNAs, an intermediate required for 2-thiolation. It is unclear whether it acts as a sulfurtransferase that transfers sulfur from thiocarboxylated URM1 onto the uridine of tRNAs at wobble position. This Drosophila sechellia (Fruit fly) protein is Cytoplasmic tRNA 2-thiolation protein 1.